The chain runs to 450 residues: Putative cysteine--tRNA ligase 2 (450 aa).

Positions 29-39 (ITPYKSTHLGH) match the 'HIGH' region motif. The 'KMSKS' region signature appears at 270–274 (KMSKS). Lys-273 contributes to the ATP binding site. The segment at 372–392 (PIHPKHSPQMRDYSEHGSAGQ) is disordered.

It belongs to the class-I aminoacyl-tRNA synthetase family. As to quaternary structure, monomer.

The protein resides in the cytoplasm. The catalysed reaction is tRNA(Cys) + L-cysteine + ATP = L-cysteinyl-tRNA(Cys) + AMP + diphosphate. The protein is Putative cysteine--tRNA ligase 2 (cysS2) of Tropheryma whipplei (strain TW08/27) (Whipple's bacillus).